Consider the following 76-residue polypeptide: Large ribosomal subunit protein eL20 (76 aa).

Belongs to the eukaryotic ribosomal protein eL20 family. Part of the 50S ribosomal subunit. Binds 23S rRNA.

The sequence is that of Large ribosomal subunit protein eL20 from Methanococcus maripaludis (strain C6 / ATCC BAA-1332).